The chain runs to 85 residues: Putative membrane protein insertion efficiency factor (85 aa).

The protein belongs to the UPF0161 family.

The protein localises to the cell inner membrane. In terms of biological role, could be involved in insertion of integral membrane proteins into the membrane. The sequence is that of Putative membrane protein insertion efficiency factor from Shewanella sediminis (strain HAW-EB3).